Here is a 495-residue protein sequence, read N- to C-terminus: Cytochrome P450 monooxygenase 64 (495 aa).

Residues 2 to 22 (FLQIVTSVLATGLLYALISVL) traverse the membrane as a helical segment. N-linked (GlcNAc...) asparagine glycosylation is found at N25 and N198. C428 lines the heme pocket.

Belongs to the cytochrome P450 family. Heme is required as a cofactor.

It is found in the membrane. It functions in the pathway secondary metabolite biosynthesis. Cytochrome P450 monooxygenase that is able to use 4-ethoxybenzoic acid as a substrate for oxidation. The chain is Cytochrome P450 monooxygenase 64 from Postia placenta (strain ATCC 44394 / Madison 698-R) (Brown rot fungus).